A 224-amino-acid polypeptide reads, in one-letter code: MAQPLVAAPSSSSITSPIPRKLCSSLLTPSSLSLSSNPRNSLQFLNSKLFLSPPSTSHRRLSIVAMAPKPGKAKKVIGVIKLALEAGKATPAPPVGPALGSKGVNIMAFCKDYNARTADKPGFVIPVEITVFDDKSFTFILKTPPASVLLLKASGAEKGSKDPQMEKVGKITIDQLRGIATEKLPDLNCTTIESAMRIIAGTAANMGIDIDPPILVKKKKEVIF.

The transit peptide at 1-66 directs the protein to the chloroplast; that stretch reads MAQPLVAAPS…SHRRLSIVAM (66 aa). N6,N6,N6-trimethyllysine occurs at positions 75 and 111.

Component of the chloroplast large ribosomal subunit (LSU). Mature 70S chloroplast ribosomes of higher plants consist of a small (30S) and a large (50S) subunit. The 30S small subunit contains 1 molecule of ribosomal RNA (16S rRNA) and 24 different proteins. The 50S large subunit contains 3 rRNA molecules (23S, 5S and 4.5S rRNA) and 33 different proteins.

It is found in the plastid. It localises to the chloroplast. Its function is as follows. Component of the chloroplast ribosome (chloro-ribosome), a dedicated translation machinery responsible for the synthesis of chloroplast genome-encoded proteins, including proteins of the transcription and translation machinery and components of the photosynthetic apparatus. This chain is Large ribosomal subunit protein uL11c (rpl11), found in Spinacia oleracea (Spinach).